The primary structure comprises 121 residues: Large ribosomal subunit protein eL18 (121 aa).

The protein belongs to the eukaryotic ribosomal protein eL18 family.

The protein is Large ribosomal subunit protein eL18 of Methanosphaerula palustris (strain ATCC BAA-1556 / DSM 19958 / E1-9c).